We begin with the raw amino-acid sequence, 241 residues long: tRNA (guanine-N(7)-)-methyltransferase (241 aa).

Positions 1-10 (MTESNDTPIQ) are enriched in polar residues. Residues 1–20 (MTESNDTPIQTEEGDERQHR) form a disordered region. The S-adenosyl-L-methionine site is built by glutamate 71, glutamate 96, aspartate 123, and aspartate 146. Aspartate 146 is an active-site residue. Substrate-binding positions include lysine 150, aspartate 182, and 219-222 (TKFE).

Belongs to the class I-like SAM-binding methyltransferase superfamily. TrmB family.

The enzyme catalyses guanosine(46) in tRNA + S-adenosyl-L-methionine = N(7)-methylguanosine(46) in tRNA + S-adenosyl-L-homocysteine. Its pathway is tRNA modification; N(7)-methylguanine-tRNA biosynthesis. Functionally, catalyzes the formation of N(7)-methylguanine at position 46 (m7G46) in tRNA. This Pseudomonas fluorescens (strain Pf0-1) protein is tRNA (guanine-N(7)-)-methyltransferase.